The chain runs to 257 residues: Acetylglutamate kinase (257 aa).

Substrate-binding positions include 43–44 (GG), R65, and N157. Residues 180-185 (DVSGIL) and 208-210 (IIT) contribute to the ATP site.

Belongs to the acetylglutamate kinase family. ArgB subfamily. Homodimer.

It localises to the cytoplasm. The catalysed reaction is N-acetyl-L-glutamate + ATP = N-acetyl-L-glutamyl 5-phosphate + ADP. It functions in the pathway amino-acid biosynthesis; L-arginine biosynthesis; N(2)-acetyl-L-ornithine from L-glutamate: step 2/4. Catalyzes the ATP-dependent phosphorylation of N-acetyl-L-glutamate. This Salmonella paratyphi B (strain ATCC BAA-1250 / SPB7) protein is Acetylglutamate kinase.